Consider the following 774-residue polypeptide: Fe(3+) dicitrate transport protein FecA (774 aa).

Residues 1 to 33 (MTPLRVFRKTTPLVNTIRLSLLPLAGLSFSAFA) form the signal peptide. Positions 56–63 (FTLSVDAS) match the TonB box motif. The TBDR plug domain occupies 129 to 250 (DVFEHAGARD…VGGVVNFVTR (122 aa)). Positions 255–774 (DFGIEAGVEG…TLYMQGSLKF (520 aa)) constitute a TBDR beta-barrel domain. The TonB C-terminal box signature appears at 757 to 774 (GIYAGQPRTLYMQGSLKF).

The protein belongs to the TonB-dependent receptor family. As to quaternary structure, interacts (via periplasmic N-terminus) with FecR (via periplasmic C-terminus).

It is found in the cell outer membrane. In terms of biological role, fecA is the outer membrane receptor protein in the Fe(3+) dicitrate transport system. The protein is Fe(3+) dicitrate transport protein FecA (fecA) of Escherichia coli (strain K12).